The primary structure comprises 293 residues: 4-hydroxy-tetrahydrodipicolinate synthase (293 aa).

Thr50 serves as a coordination point for pyruvate. The Proton donor/acceptor role is filled by Tyr138. Lys166 serves as the catalytic Schiff-base intermediate with substrate. Pyruvate is bound at residue Val206.

Belongs to the DapA family. In terms of assembly, homotetramer; dimer of dimers.

It localises to the cytoplasm. The enzyme catalyses L-aspartate 4-semialdehyde + pyruvate = (2S,4S)-4-hydroxy-2,3,4,5-tetrahydrodipicolinate + H2O + H(+). The protein operates within amino-acid biosynthesis; L-lysine biosynthesis via DAP pathway; (S)-tetrahydrodipicolinate from L-aspartate: step 3/4. Its function is as follows. Catalyzes the condensation of (S)-aspartate-beta-semialdehyde [(S)-ASA] and pyruvate to 4-hydroxy-tetrahydrodipicolinate (HTPA). This Cutibacterium acnes (strain DSM 16379 / KPA171202) (Propionibacterium acnes) protein is 4-hydroxy-tetrahydrodipicolinate synthase.